We begin with the raw amino-acid sequence, 247 residues long: Adenosylcobinamide-GDP ribazoletransferase (247 aa).

The next 6 membrane-spanning stretches (helical) occupy residues 31–51, 55–75, 109–129, 135–155, 183–203, and 227–247; these read ILFY…VTCI, LPAL…TGGL, IGVL…YVLI, LFLI…FLTT, VLLL…SFLI, and AIEI…FYLV.

This sequence belongs to the CobS family. Requires Mg(2+) as cofactor.

The protein resides in the cell inner membrane. The catalysed reaction is alpha-ribazole + adenosylcob(III)inamide-GDP = adenosylcob(III)alamin + GMP + H(+). The enzyme catalyses alpha-ribazole 5'-phosphate + adenosylcob(III)inamide-GDP = adenosylcob(III)alamin 5'-phosphate + GMP + H(+). It functions in the pathway cofactor biosynthesis; adenosylcobalamin biosynthesis; adenosylcobalamin from cob(II)yrinate a,c-diamide: step 7/7. In terms of biological role, joins adenosylcobinamide-GDP and alpha-ribazole to generate adenosylcobalamin (Ado-cobalamin). Also synthesizes adenosylcobalamin 5'-phosphate from adenosylcobinamide-GDP and alpha-ribazole 5'-phosphate. This is Adenosylcobinamide-GDP ribazoletransferase from Acinetobacter baumannii (strain ACICU).